We begin with the raw amino-acid sequence, 277 residues long: Methyltransferase str3 (277 aa).

It belongs to the methyltransferase superfamily. LaeA methyltransferase family.

It functions in the pathway mycotoxin biosynthesis. In terms of biological role, methyltransferase; part of the gene cluster that mediates the biosynthesis of strobilurin A, an antifungal polyketide that contains a key beta-methoxyacrylate toxophore that targets the complex III of the mitochondrial electron transport chain. Strobilurin biosynthesis begins with construction of benzoyl CoA by step-wise elimination of ammonia from phenylalanine by the phenylalanine ammonia-lyase str11, oxygenation by str8 and retro-Claisen reaction to form benzoic acid, which is activated to its CoA thiolester benzoyl CoA by the dedicated CoA ligase str10. Benzoyl CoA forms the starter unit for the highly reducing polyketide synthase stpks1 that produces the polyketide prestrobilutin A. The FAD-dependent oxygenase str9 then catalyzes the key oxidative rearrangement responsible for the creation of the beta-methoxyacrylate toxophore. Str9 performs epoxidation of the 2,3 olefin of prestrobilutin A, followed by Meinwald rearrangement to furnish the aldehyde intermediate. Rapid enolization of the aldehyde intermediate would give the beta-methoxyacrylate skeleton and methylations catalyzed by str2 and str3 complete the synthesis and lead to the production of strobilurin A. The short-chain dehydrogenase stl2 and the dehydrogenase str4 play a role in the shunt pathway leading to the production of bolineol. The cluster encodes no obvious halogenase gene that could be involved in production of strobilurin B, nor any obvious dimethylallyl-transferase that could be involved in the production of strobilurin G. It is possible that unknown proteins encoded in, or near, the cluster (such as str1 or stl1) may form new classes of halogenases or dimethylally-transferases, or that the responsible genes are located elsewhere on the genome. Similarly, proteins encoded by str5/str6 hydrolases appear to have no chemical role in the biosynthesis of strobilurin A. Finally, no obvious self-resistance gene is found within the cluster. In Strobilurus tenacellus, this protein is Methyltransferase str3.